A 248-amino-acid chain; its full sequence is MYKVVMIRHGESEWNKLNLFTGWTDVDLSDRGVEEAIWAGKKLKEEGYTFDVAFTSVLKRAIKTLNLVLEQMNLDWIPVYKHWRLNERHYGALQGLNKAEMTERYGEQQVLLWRRSYDVPPPPLEKTDPRWPGNDPRYALVPEDELPLCESLKDTEARVVPYWADMIVPAIKEGKKVLISAHGNSMRAIVKYLDKMSGEEIAKTNIPTGIPLVYELDESMRPIRHYYLADEDFLKAKEQEVANQIYKK.

Residues 8-15 (RHGESEWN), 21-22 (TG), Arg60, 87-90 (ERHY), Lys98, 114-115 (RR), and 183-184 (GN) each bind substrate. His9 serves as the catalytic Tele-phosphohistidine intermediate. Residue Glu87 is the Proton donor/acceptor of the active site.

The protein belongs to the phosphoglycerate mutase family. BPG-dependent PGAM subfamily.

The enzyme catalyses (2R)-2-phosphoglycerate = (2R)-3-phosphoglycerate. It functions in the pathway carbohydrate degradation; glycolysis; pyruvate from D-glyceraldehyde 3-phosphate: step 3/5. Its function is as follows. Catalyzes the interconversion of 2-phosphoglycerate and 3-phosphoglycerate. The chain is 2,3-bisphosphoglycerate-dependent phosphoglycerate mutase from Coprothermobacter proteolyticus (strain ATCC 35245 / DSM 5265 / OCM 4 / BT).